We begin with the raw amino-acid sequence, 279 residues long: Undecaprenyl-diphosphatase (279 aa).

A run of 7 helical transmembrane segments spans residues 10-30 (FICF…FLPI), 48-68 (LGVS…IYYF), 96-116 (LFLY…LIKL), 128-148 (GLFS…LSEI), 203-223 (SFLV…FSLF), 229-249 (IDII…IFAI), and 259-279 (NNTL…LTTL).

Belongs to the UppP family.

It localises to the cell inner membrane. It carries out the reaction di-trans,octa-cis-undecaprenyl diphosphate + H2O = di-trans,octa-cis-undecaprenyl phosphate + phosphate + H(+). In terms of biological role, catalyzes the dephosphorylation of undecaprenyl diphosphate (UPP). Confers resistance to bacitracin. This Prochlorococcus marinus (strain NATL2A) protein is Undecaprenyl-diphosphatase.